The primary structure comprises 319 residues: Protein sprouty homolog 1 (319 aa).

Position 1 is an N-acetylmethionine (Met-1). The disordered stretch occupies residues 54–160 (TEGPSVVKRP…ERAIRTQPKQ (107 aa)). A compositionally biased stretch (basic and acidic residues) spans 69-79 (PRQEKHERTHE). Over residues 112 to 131 (SRSTSTGSAASSGSNSSASS) the composition is skewed to low complexity. Residues 183–295 (QCGKCKCGEC…CYDWIHRPGC (113 aa)) enclose the SPR domain.

Belongs to the sprouty family. In terms of assembly, forms heterodimers with SPRY2. Interacts with TESK1. Interacts with CAV1 (via C-terminus).

It is found in the cytoplasm. The protein localises to the membrane. In terms of biological role, inhibits fibroblast growth factor (FGF)-induced retinal lens fiber differentiation, probably by inhibiting FGF-mediated phosphorylation of ERK1/2. Inhibits TGFB-induced epithelial-to-mesenchymal transition in lens epithelial cells. This chain is Protein sprouty homolog 1 (SPRY1), found in Cervus elaphus (Red deer).